The sequence spans 304 residues: Ribonuclease Z (304 aa).

Residues histidine 63, histidine 65, aspartate 67, histidine 68, histidine 141, aspartate 208, and histidine 266 each coordinate Zn(2+). The active-site Proton acceptor is the aspartate 67.

The protein belongs to the RNase Z family. Homodimer. The cofactor is Zn(2+).

It carries out the reaction Endonucleolytic cleavage of RNA, removing extra 3' nucleotides from tRNA precursor, generating 3' termini of tRNAs. A 3'-hydroxy group is left at the tRNA terminus and a 5'-phosphoryl group is left at the trailer molecule.. In terms of biological role, zinc phosphodiesterase, which displays some tRNA 3'-processing endonuclease activity. Probably involved in tRNA maturation, by removing a 3'-trailer from precursor tRNA. This Chlamydia trachomatis serovar L2 (strain ATCC VR-902B / DSM 19102 / 434/Bu) protein is Ribonuclease Z.